The sequence spans 432 residues: Serine--tRNA ligase (432 aa).

An L-serine-binding site is contributed by 237–239; that stretch reads TSE. Position 268–270 (268–270) interacts with ATP; sequence RSE. Glu291 serves as a coordination point for L-serine. 355–358 lines the ATP pocket; the sequence is EISS. Ser390 provides a ligand contact to L-serine.

This sequence belongs to the class-II aminoacyl-tRNA synthetase family. Type-1 seryl-tRNA synthetase subfamily. Homodimer. The tRNA molecule binds across the dimer.

The protein localises to the cytoplasm. It catalyses the reaction tRNA(Ser) + L-serine + ATP = L-seryl-tRNA(Ser) + AMP + diphosphate + H(+). It carries out the reaction tRNA(Sec) + L-serine + ATP = L-seryl-tRNA(Sec) + AMP + diphosphate + H(+). It participates in aminoacyl-tRNA biosynthesis; selenocysteinyl-tRNA(Sec) biosynthesis; L-seryl-tRNA(Sec) from L-serine and tRNA(Sec): step 1/1. Its function is as follows. Catalyzes the attachment of serine to tRNA(Ser). Is also able to aminoacylate tRNA(Sec) with serine, to form the misacylated tRNA L-seryl-tRNA(Sec), which will be further converted into selenocysteinyl-tRNA(Sec). The protein is Serine--tRNA ligase of Methylobacillus flagellatus (strain ATCC 51484 / DSM 6875 / VKM B-1610 / KT).